A 455-amino-acid polypeptide reads, in one-letter code: Notoamide E oxidase notB' (455 aa).

A helical membrane pass occupies residues 11 to 31 (PAILSPADLTVIIVGLGIAGL). Residues Glu-48 and Gly-61 each coordinate FAD. N-linked (GlcNAc...) asparagine glycosylation is present at Asn-75. Arg-121 lines the FAD pocket. Catalysis depends on residues Arg-199 and Tyr-229. FAD contacts are provided by Asp-324 and Gly-337.

Belongs to the paxM FAD-dependent monooxygenase family. FAD is required as a cofactor.

It is found in the membrane. The enzyme catalyses notoamide E + NADPH + O2 + H(+) = notoamide C + NADP(+) + H2O. It carries out the reaction notoamide E + NADPH + O2 + H(+) = notoamide D + NADP(+) + H2O. It functions in the pathway alkaloid biosynthesis. FAD-dependent monooxygenase; part of the gene cluster that mediates the biosynthesis of notoamide, a fungal indole alkaloid that belongs to a family of natural products containing a characteristic bicyclo[2.2.2]diazaoctane core. The first step of notoamide biosynthesis involves coupling of L-proline and L-tryptophan by the bimodular NRPS notE', to produce cyclo-L-tryptophan-L-proline called brevianamide F. The reverse prenyltransferase notF' then acts as a deoxybrevianamide E synthase and converts brevianamide F to deoxybrevianamide E via reverse prenylation at C-2 of the indole ring leading to the bicyclo[2.2.2]diazaoctane core. Deoxybrevianamide E is further hydroxylated at C-6 of the indole ring, likely catalyzed by the cytochrome P450 monooxygenase notG', to yield 6-hydroxy-deoxybrevianamide E. 6-hydroxy-deoxybrevianamide E is a specific substrate of the prenyltransferase notC' for normal prenylation at C-7 to produce 6-hydroxy-7-prenyl-deoxybrevianamide, also called notoamide S. As the proposed pivotal branching point in notoamide biosynthesis, notoamide S can be diverted to notoamide E through an oxidative pyran ring closure putatively catalyzed by either notH' cytochrome P450 monooxygenase or the notD' FAD-linked oxidoreductase. This step would be followed by an indole 2,3-epoxidation-initiated pinacol-like rearrangement catalyzed by the notB' FAD-dependent monooxygenase leading to the formation of notoamide C and notoamide D. On the other hand notoamide S is converted to notoamide T by notH' (or notD'), a bifunctional oxidase that also functions as the intramolecular Diels-Alderase responsible for generation of (-)-notoamide T. To generate antipodal (+)-notoaminide T, notH (or notD) in Aspergillus strain MF297-2 is expected to catalyze a Diels-Alder reaction leading to the opposite stereochemistry. The remaining oxidoreductase notD' (or notH') likely catalyzes the oxidative pyran ring formation to yield (-)-stephacidin A. The FAD-dependent monooxygenase notI' is highly similar to notB' and is predicted to catalyze a similar conversion from (-)-stephacidin A to (+)-notoamide B via the 2,3-epoxidation of (-)-stephacidin A followed by a pinacol-type rearrangement. Finally, it remains unclear which enzyme could be responsible for the final hydroxylation steps leading to notoamide A and sclerotiamide. In Aspergillus versicolor, this protein is Notoamide E oxidase notB'.